The following is a 398-amino-acid chain: 1-deoxy-D-xylulose 5-phosphate reductoisomerase (398 aa).

7 residues coordinate NADPH: Thr10, Gly11, Ser12, Ile13, Gly36, Asn38, and Asn124. Lys125 contributes to the 1-deoxy-D-xylulose 5-phosphate binding site. Glu126 provides a ligand contact to NADPH. Residue Asp150 participates in Mn(2+) binding. The 1-deoxy-D-xylulose 5-phosphate site is built by Ser151, Glu152, Ser176, and His199. Mn(2+) is bound at residue Glu152. Gly205 is a binding site for NADPH. 1-deoxy-D-xylulose 5-phosphate-binding residues include Ser212, Asn217, Lys218, and Glu221. Glu221 provides a ligand contact to Mn(2+).

This sequence belongs to the DXR family. The cofactor is Mg(2+). It depends on Mn(2+) as a cofactor.

It carries out the reaction 2-C-methyl-D-erythritol 4-phosphate + NADP(+) = 1-deoxy-D-xylulose 5-phosphate + NADPH + H(+). The protein operates within isoprenoid biosynthesis; isopentenyl diphosphate biosynthesis via DXP pathway; isopentenyl diphosphate from 1-deoxy-D-xylulose 5-phosphate: step 1/6. Catalyzes the NADPH-dependent rearrangement and reduction of 1-deoxy-D-xylulose-5-phosphate (DXP) to 2-C-methyl-D-erythritol 4-phosphate (MEP). The polypeptide is 1-deoxy-D-xylulose 5-phosphate reductoisomerase (Nostoc punctiforme (strain ATCC 29133 / PCC 73102)).